The following is a 126-amino-acid chain: Small ribosomal subunit protein uS13 (126 aa).

The tract at residues 92-126 is disordered; the sequence is HRMGLPVRGQRTRTNARTRRGRRQTVAGKKKAPGK. The segment covering 101–126 has biased composition (basic residues); the sequence is QRTRTNARTRRGRRQTVAGKKKAPGK.

The protein belongs to the universal ribosomal protein uS13 family. Part of the 30S ribosomal subunit. Forms a loose heterodimer with protein S19. Forms two bridges to the 50S subunit in the 70S ribosome.

Functionally, located at the top of the head of the 30S subunit, it contacts several helices of the 16S rRNA. In the 70S ribosome it contacts the 23S rRNA (bridge B1a) and protein L5 of the 50S subunit (bridge B1b), connecting the 2 subunits; these bridges are implicated in subunit movement. Contacts the tRNAs in the A and P-sites. The sequence is that of Small ribosomal subunit protein uS13 from Nostoc sp. (strain PCC 7120 / SAG 25.82 / UTEX 2576).